The chain runs to 29 residues: EVVLDSDGEMLRNGGKYYLSPASPIGGGA.

It belongs to the protease inhibitor I3 (leguminous Kunitz-type inhibitor) family. As to quaternary structure, monomer and dimer.

Functionally, inhibits bovine trypsin but not chymotrypsin. Also inhibits trypsin-like enzymes from midgut of several lepidopteran species and inhibits larval development in those species. Has fungicidal activity against yeast C.buinensis. Has a bacteriostatic effect against E.coli. Is not cytotoxic. In Inga vera (River koko), this protein is Kunitz-type trypsin inhibitor IVTI.